Consider the following 609-residue polypeptide: DNA mismatch repair protein MutL (609 aa).

Positions 364-386 (SVNSKPTDYRPAMSPSFKSTPNT) are disordered.

The protein belongs to the DNA mismatch repair MutL/HexB family.

This protein is involved in the repair of mismatches in DNA. It is required for dam-dependent methyl-directed DNA mismatch repair. May act as a 'molecular matchmaker', a protein that promotes the formation of a stable complex between two or more DNA-binding proteins in an ATP-dependent manner without itself being part of a final effector complex. The chain is DNA mismatch repair protein MutL from Rickettsia akari (strain Hartford).